The primary structure comprises 50 residues: PhoP/PhoQ regulator MgrB (50 aa).

Over 1–4 (MLDL) the chain is Cytoplasmic. Residues 5–27 (NITKLVTTVVIIAACCLFYLLAL) traverse the membrane as a helical segment. Residues 28–50 (DSYCDQGGTFSTGICAITTIVPW) lie on the Periplasmic side of the membrane.

This sequence belongs to the MgrB family. As to quaternary structure, probably interacts with the periplasmic domain of PhoQ.

The protein localises to the cell inner membrane. Its function is as follows. PhoP-regulated transcription is redox-sensitive, being activated when the periplasm becomes more reducing. MgrB acts between DsbA/DsbB and PhoP/PhoQ in this pathway. Represses PhoP/PhoQ signaling, possibly by binding to the periplasmic domain of PhoQ, altering its activity and that of downstream effector PhoP. The chain is PhoP/PhoQ regulator MgrB from Yersinia pestis.